Here is a 1448-residue protein sequence, read N- to C-terminus: MGARNSVLSGKKADELEKIRLRPGGKKKYMLKHVVWAANELDRFGLAESLLENKEGCQKILSVLAPLVPTGSENLKSLYNTVCVIWCIHAEEKVKHTEEAKQIVQRHLVVETGTAETMPKTSRPTAPSSGRGGNYPVQQIGGNYVHLPLSPRTLNAWVKLIEEKKFGAEVVPGFQALSEGCTPYDINQMLNCVGDHQAAMQIIRDIINEEAADWDLQHPQPAPQQGQLREPSGSDIAGTTSSVDEQIQWMYRQQNPIPVGNIYRRWIQLGLQKCVRMYNPTNILDVKQGPKEPFQSYVDRFYKSLRAEQTDAAVKNWMTQTLLIQNANPDCKLVLKGLGVNPTLEEMLTACQGVGGPGQKARLMAEALKEALAPVPIPFAAAQKRGPRKPIKCWNCGKEGHSARQCRAPRRQGCWKCGKMDHVMAKCPDRQAGFFRPWSMGKEAPQFPHGSSASGADANCSPRGPSCGSAKELHAVGQAAERKQREALQGGDRGFAAPQFSLWRRPVVTAHIEGQPVEVLLDTGADDSIVTGIELGPHYTPKIVGGIGGFINTKEYKNVKIEVLGKRIKGTIMTGDTPINIFGRNLLTALGMSLNLPIAKVEPVKVTLKPGKVGPKLKQWPLSKEKIVALREICEKMEKDGQLEEAPPTNPYNTPTFAIKKKDKNKWRMLIDFRELNRVTQDFTEVQLGIPHPAGLAKRKRITVLDIGDAYFSIPLDEEFRQYTAFTLPSVNNAEPGKRYIYKVLPQGWKGSPAIFQYTMRHVLEPFRKANPDVTLVQYMDDILIASDRTDLEHDRVVLQLKELLNSIGFSTPEEKFQKDPPFQWMGYELWPTKWKLQKIELPQRETWTVNDIQKLVGVLNWAAQIYPGIKTKHLCRLIRGKMTLTEEVQWTEMAEAEYEENKIILSQEQEGCYYQEGKPLEATVIKSQDNQWSYKIHQEDKILKVGKFAKIKNTHTNGVRLLAHVIQKIGKEAIVIWGQVPKFHLPVERDVWEQWWTDYWQVTWIPEWDFISTPPLVRLVFNLVKDPIEGEETYYTDGSCNKQSKEGKAGYITDRGKDKVKVLEQTTNQQAELEAFLMALTDSGPKTNIIVDSQYVMGIITGCPTESESRLVNQIIEEMIKKSEIYVAWVPAHKGIGGNQEIDHLVSQGIRQVLFLEKIEPAQEEHDKYHSNVKELVFKFGLPRIVARQIVDTCDKCHQKGEAIHGQVNSDLGTWQMDCTHLEGKIVIVAVHVASGFIEAEVIPQETGRQTALFLLKLAGRWPITHLHTDNGANFASQEVKMVAWWAGIEHTFGVPYNPQSQGVVEAMNHHLKNQIDRIREQANSVETIVLMAVHCMNFKRRGGIGDMTPAERLINMITTEQEIQFQQSKNSKFKNFRVYYREGRDQLWKGPGELLWKGEGAVILKVGTDIKVVPRRKAKIIKDYGGGKEVDSSSHMEDTGEAREVA.

The N-myristoyl glycine; by host moiety is linked to residue Gly2. Positions 16–22 (LEKIRLR) match the Nuclear export signal motif. The short motif at 26–32 (KKKYMLK) is the Nuclear localization signal element. Disordered stretches follow at residues 114-133 (TAETMPKTSRPTAPSSGRGG) and 217-239 (QHPQPAPQQGQLREPSGSDIAGT). Positions 119–128 (PKTSRPTAPS) are enriched in polar residues. CCHC-type zinc fingers lie at residues 391–408 (IKCWNCGKEGHSARQCRA) and 412–429 (QGCWKCGKMDHVMAKCPD). The disordered stretch occupies residues 443–464 (EAPQFPHGSSASGADANCSPRG). Positions 517 to 586 (VEVLLDTGAD…TPINIFGRNL (70 aa)) constitute a Peptidase A2 domain. Asp522 serves as the catalytic For protease activity; shared with dimeric partner. In terms of domain architecture, Reverse transcriptase spans 640–830 (DGQLEEAPPT…PPFQWMGYEL (191 aa)). Residues Asp706, Asp781, and Asp782 each coordinate Mg(2+). The RT 'primer grip' stretch occupies residues 823–831 (FQWMGYELW). A Tryptophan repeat motif motif is present at residues 993–1009 (WEQWWTDYWQVTWIPEW). Residues 1029–1152 (IEGEETYYTD…IDHLVSQGIR (124 aa)) enclose the RNase H type-1 domain. The Mg(2+) site is built by Asp1038 and Glu1073. The Integrase-type zinc finger occupies 1158 to 1199 (EKIEPAQEEHDKYHSNVKELVFKFGLPRIVARQIVDTCDKCH). Residues His1167, His1171, Cys1195, and Cys1198 each coordinate Zn(2+). Residues 1209–1359 (VNSDLGTWQM…TPAERLINMI (151 aa)) enclose the Integrase catalytic domain. Asp1219 is a binding site for Mg(2+). A DNA-binding region (integrase-type) is located at residues 1378–1425 (FRVYYREGRDQLWKGPGELLWKGEGAVILKVGTDIKVVPRRKAKIIKD). Residues 1426 to 1448 (YGGGKEVDSSSHMEDTGEAREVA) form a disordered region.

As to quaternary structure, homotrimer. Interacts with gp41 (via C-terminus). Homodimer. The active site consists of two apposed aspartic acid residues. In terms of assembly, heterodimer of p66 RT and p51 RT (RT p66/p51). Heterodimerization of RT is essential for DNA polymerase activity. Despite the sequence identities, p66 RT and p51 RT have distinct folding. As to quaternary structure, homotetramer; may further associate as a homohexadecamer. Requires Mg(2+) as cofactor. Post-translationally, specific enzymatic cleavages by the viral protease yield mature proteins. The protease is released by autocatalytic cleavage. The polyprotein is cleaved during and after budding, this process is termed maturation. Proteolytic cleavage of p66 RT removes the RNase H domain to yield the p51 RT subunit. Capsid protein p24 is phosphorylated.

It localises to the virion. It is found in the host nucleus. The protein resides in the host cytoplasm. Its subcellular location is the host cell membrane. The enzyme catalyses Specific for a P1 residue that is hydrophobic, and P1' variable, but often Pro.. It carries out the reaction Endohydrolysis of RNA in RNA/DNA hybrids. Three different cleavage modes: 1. sequence-specific internal cleavage of RNA. Human immunodeficiency virus type 1 and Moloney murine leukemia virus enzymes prefer to cleave the RNA strand one nucleotide away from the RNA-DNA junction. 2. RNA 5'-end directed cleavage 13-19 nucleotides from the RNA end. 3. DNA 3'-end directed cleavage 15-20 nucleotides away from the primer terminus.. The catalysed reaction is 3'-end directed exonucleolytic cleavage of viral RNA-DNA hybrid.. It catalyses the reaction DNA(n) + a 2'-deoxyribonucleoside 5'-triphosphate = DNA(n+1) + diphosphate. The viral protease is inhibited by many synthetic protease inhibitors (PIs), such as amprenavir, atazanavir, indinavir, loprinavir, nelfinavir, ritonavir and saquinavir. RT can be inhibited either by nucleoside RT inhibitors (NRTIs) or by non nucleoside RT inhibitors (NNRTIs). NRTIs act as chain terminators, whereas NNRTIs inhibit DNA polymerization by binding a small hydrophobic pocket near the RT active site and inducing an allosteric change in this region. Classical NRTIs are abacavir, adefovir (PMEA), didanosine (ddI), lamivudine (3TC), stavudine (d4T), tenofovir (PMPA), zalcitabine (ddC), and zidovudine (AZT). Classical NNRTIs are atevirdine (BHAP U-87201E), delavirdine, efavirenz (DMP-266), emivirine (I-EBU), and nevirapine (BI-RG-587). The tritherapies used as a basic effective treatment of AIDS associate two NRTIs and one NNRTI. Use of protease inhibitors in tritherapy regimens permit more ambitious therapeutic strategies. Its function is as follows. Gag-Pol polyprotein and Gag polyprotein may regulate their own translation, by the binding genomic RNA in the 5'-UTR. At low concentration, Gag-Pol and Gag would promote translation, whereas at high concentration, the polyproteins encapsidate genomic RNA and then shut off translation. Matrix protein p17 has two main functions: in infected cell, it targets Gag and Gag-pol polyproteins to the plasma membrane via a multipartite membrane-binding signal, that includes its myristointegration complex. The myristoylation signal and the NLS exert conflicting influences its subcellular localization. The key regulation of these motifs might be phosphorylation of a portion of MA molecules on the C-terminal tyrosine at the time of virus maturation, by virion-associated cellular tyrosine kinase. Implicated in the release from host cell mediated by Vpu. Functionally, capsid protein p24 forms the conical core that encapsulates the genomic RNA-nucleocapsid complex in the virion. The core is constituted by capsid protein hexamer subunits. The core is disassembled soon after virion entry. Interaction with host PPIA/CYPA protects the virus from restriction by host TRIM5-alpha and from an unknown antiviral activity in host cells. This capsid restriction by TRIM5 is one of the factors which restricts SIV to the simian species. In terms of biological role, nucleocapsid protein p7 encapsulates and protects viral dimeric unspliced (genomic) RNA. Binds these RNAs through its zinc fingers. Facilitates rearangement of nucleic acid secondary structure during retrotranscription of genomic RNA. This capability is referred to as nucleic acid chaperone activity. Its function is as follows. The aspartyl protease mediates proteolytic cleavages of Gag and Gag-Pol polyproteins during or shortly after the release of the virion from the plasma membrane. Cleavages take place as an ordered, step-wise cascade to yield mature proteins. This process is called maturation. Displays maximal activity during the budding process just prior to particle release from the cell. Also cleaves Nef and Vif, probably concomitantly with viral structural proteins on maturation of virus particles. Hydrolyzes host EIF4GI and PABP1 in order to shut off the capped cellular mRNA translation. The resulting inhibition of cellular protein synthesis serves to ensure maximal viral gene expression and to evade host immune response. Reverse transcriptase/ribonuclease H (RT) is a multifunctional enzyme that converts the viral dimeric RNA genome into dsDNA in the cytoplasm, shortly after virus entry into the cell. This enzyme displays a DNA polymerase activity that can copy either DNA or RNA templates, and a ribonuclease H (RNase H) activity that cleaves the RNA strand of RNA-DNA heteroduplexes in a partially processive 3' to 5' endonucleasic mode. Conversion of viral genomic RNA into dsDNA requires many steps. A tRNA binds to the primer-binding site (PBS) situated at the 5'-end of the viral RNA. RT uses the 3' end of the tRNA primer to perform a short round of RNA-dependent minus-strand DNA synthesis. The reading proceeds through the U5 region and ends after the repeated (R) region which is present at both ends of viral RNA. The portion of the RNA-DNA heteroduplex is digested by the RNase H, resulting in a ssDNA product attached to the tRNA primer. This ssDNA/tRNA hybridizes with the identical R region situated at the 3' end of viral RNA. This template exchange, known as minus-strand DNA strong stop transfer, can be either intra- or intermolecular. RT uses the 3' end of this newly synthesized short ssDNA to perform the RNA-dependent minus-strand DNA synthesis of the whole template. RNase H digests the RNA template except for two polypurine tracts (PPTs) situated at the 5'-end and near the center of the genome. It is not clear if both polymerase and RNase H activities are simultaneous. RNase H can probably proceed both in a polymerase-dependent (RNA cut into small fragments by the same RT performing DNA synthesis) and a polymerase-independent mode (cleavage of remaining RNA fragments by free RTs). Secondly, RT performs DNA-directed plus-strand DNA synthesis using the PPTs that have not been removed by RNase H as primers. PPTs and tRNA primers are then removed by RNase H. The 3' and 5' ssDNA PBS regions hybridize to form a circular dsDNA intermediate. Strand displacement synthesis by RT to the PBS and PPT ends produces a blunt ended, linear dsDNA copy of the viral genome that includes long terminal repeats (LTRs) at both ends. Functionally, integrase catalyzes viral DNA integration into the host chromosome, by performing a series of DNA cutting and joining reactions. This enzyme activity takes place after virion entry into a cell and reverse transcription of the RNA genome in dsDNA. The first step in the integration process is 3' processing. This step requires a complex comprising the viral genome, matrix protein, Vpr and integrase. This complex is called the pre-integration complex (PIC). The integrase protein removes 2 nucleotides from each 3' end of the viral DNA, leaving recessed CA OH's at the 3' ends. In the second step, the PIC enters cell nucleus. This process is mediated through integrase and Vpr proteins, and allows the virus to infect a non dividing cell. This ability to enter the nucleus is specific of lentiviruses, other retroviruses cannot and rely on cell division to access cell chromosomes. In the third step, termed strand transfer, the integrase protein joins the previously processed 3' ends to the 5' ends of strands of target cellular DNA at the site of integration. The 5'-ends are produced by integrase-catalyzed staggered cuts, 5 bp apart. A Y-shaped, gapped, recombination intermediate results, with the 5'-ends of the viral DNA strands and the 3' ends of target DNA strands remaining unjoined, flanking a gap of 5 bp. The last step is viral DNA integration into host chromosome. This involves host DNA repair synthesis in which the 5 bp gaps between the unjoined strands are filled in and then ligated. Since this process occurs at both cuts flanking the SIV genome, a 5 bp duplication of host DNA is produced at the ends of SIV integration. Alternatively, Integrase may catalyze the excision of viral DNA just after strand transfer, this is termed disintegration. The chain is Gag-Pol polyprotein (gag-pol) from Simian immunodeficiency virus (isolate Mm251) (SIV-mac).